A 210-amino-acid polypeptide reads, in one-letter code: Putative 3-methyladenine DNA glycosylase (210 aa).

The protein belongs to the DNA glycosylase MPG family.

This is Putative 3-methyladenine DNA glycosylase from Lactobacillus acidophilus (strain ATCC 700396 / NCK56 / N2 / NCFM).